A 445-amino-acid polypeptide reads, in one-letter code: UDP-N-acetylmuramate--L-alanine ligase (445 aa).

108–114 is a binding site for ATP; it reads GSDGKTT.

Belongs to the MurCDEF family.

It is found in the cytoplasm. The enzyme catalyses UDP-N-acetyl-alpha-D-muramate + L-alanine + ATP = UDP-N-acetyl-alpha-D-muramoyl-L-alanine + ADP + phosphate + H(+). The protein operates within cell wall biogenesis; peptidoglycan biosynthesis. Cell wall formation. This is UDP-N-acetylmuramate--L-alanine ligase from Pseudothermotoga lettingae (strain ATCC BAA-301 / DSM 14385 / NBRC 107922 / TMO) (Thermotoga lettingae).